Here is a 1604-residue protein sequence, read N- to C-terminus: E3 ubiquitin-protein ligase HECW1 (1604 aa).

One can recognise a C2 domain in the interval 182–318 (SAAPIFKGIG…LERHAIGDRV (137 aa)). 4 disordered regions span residues 350-539 (DEEI…CSLP), 572-604 (PSAQ…LSEV), 642-667 (GIGA…QQGA), and 727-826 (STVF…TIDE). Over residues 362-380 (SAETQDSIMNSMVGNSNGE) the composition is skewed to polar residues. The segment covering 387-396 (EFCKDAKPES) has biased composition (basic and acidic residues). Residues 398 to 412 (SEGNGVNSSENQNQE) are compositionally biased toward polar residues. 2 stretches are compositionally biased toward acidic residues: residues 435–444 (APEEPGELQD) and 458–469 (EVAEGLPLDEDS). Basic and acidic residues predominate over residues 494 to 505 (GAREEEMQKGKD). Residues 580 to 589 (TEEEDGLEEE) are compositionally biased toward acidic residues. Over residues 590-601 (STLKESSEKDGL) the composition is skewed to basic and acidic residues. 3 stretches are compositionally biased toward polar residues: residues 654 to 667 (STGS…QQGA), 748 to 762 (DSVQ…STNG), and 803 to 812 (HNSQPISQLP). The 34-residue stretch at 826–859 (EPLPPNWEARIDSHGRVFYVDHINRTTTWQRPSM) folds into the WW 1 domain. S871 is subject to Phosphoserine. A coiled-coil region spans residues 871–898 (SVHQMEQLNRRYQNIQRTMATERAEEDS). The interval 890–936 (ATERAEEDSGNQNSEQIPDGGGGGGGGSDSEAESSQSSLDLRREGSL) is disordered. A compositionally biased stretch (gly residues) spans 908-917 (DGGGGGGGGS). 2 positions are modified to phosphoserine: S935 and S937. A WW 2 domain is found at 1016 to 1049 (LELPRGWEIKTDHQGKSFFVDHNSRATTFIDPRI). The HECT domain maps to 1269–1604 (SRKELQRNKL…VEETSTFGLE (336 aa)). The active-site Glycyl thioester intermediate is the C1572.

In terms of assembly, interacts with DVL1 and SSR3. In terms of tissue distribution, predominantly expressed in neurons of the spinal cord.

Its subcellular location is the cytoplasm. The catalysed reaction is S-ubiquitinyl-[E2 ubiquitin-conjugating enzyme]-L-cysteine + [acceptor protein]-L-lysine = [E2 ubiquitin-conjugating enzyme]-L-cysteine + N(6)-ubiquitinyl-[acceptor protein]-L-lysine.. It participates in protein modification; protein ubiquitination. In terms of biological role, E3 ubiquitin-protein ligase that mediates ubiquitination and subsequent degradation of DVL1. This Mus musculus (Mouse) protein is E3 ubiquitin-protein ligase HECW1 (Hecw1).